Reading from the N-terminus, the 550-residue chain is Arginine--tRNA ligase (550 aa).

Positions 130–140 (ANPTGPIHLGG) match the 'HIGH' region motif.

The protein belongs to the class-I aminoacyl-tRNA synthetase family. Monomer.

The protein localises to the cytoplasm. The enzyme catalyses tRNA(Arg) + L-arginine + ATP = L-arginyl-tRNA(Arg) + AMP + diphosphate. In Corynebacterium glutamicum (strain ATCC 13032 / DSM 20300 / JCM 1318 / BCRC 11384 / CCUG 27702 / LMG 3730 / NBRC 12168 / NCIMB 10025 / NRRL B-2784 / 534), this protein is Arginine--tRNA ligase (argS).